Consider the following 504-residue polypeptide: ATP synthase subunit alpha (504 aa).

Residue 169-176 (GDRQTGKT) coordinates ATP.

This sequence belongs to the ATPase alpha/beta chains family. In terms of assembly, F-type ATPases have 2 components, CF(1) - the catalytic core - and CF(0) - the membrane proton channel. CF(1) has five subunits: alpha(3), beta(3), gamma(1), delta(1), epsilon(1). CF(0) has three main subunits: a(1), b(2) and c(9-12). The alpha and beta chains form an alternating ring which encloses part of the gamma chain. CF(1) is attached to CF(0) by a central stalk formed by the gamma and epsilon chains, while a peripheral stalk is formed by the delta and b chains.

It is found in the cell membrane. The catalysed reaction is ATP + H2O + 4 H(+)(in) = ADP + phosphate + 5 H(+)(out). Produces ATP from ADP in the presence of a proton gradient across the membrane. The alpha chain is a regulatory subunit. This Clostridium botulinum (strain Alaska E43 / Type E3) protein is ATP synthase subunit alpha.